Here is a 307-residue protein sequence, read N- to C-terminus: Aspartate carbamoyltransferase catalytic subunit (307 aa).

The carbamoyl phosphate site is built by R59 and T60. K87 is a binding site for L-aspartate. 3 residues coordinate carbamoyl phosphate: R109, H137, and Q140. L-aspartate contacts are provided by R173 and R223. Positions 266 and 267 each coordinate carbamoyl phosphate.

It belongs to the aspartate/ornithine carbamoyltransferase superfamily. ATCase family. In terms of assembly, heterododecamer (2C3:3R2) of six catalytic PyrB chains organized as two trimers (C3), and six regulatory PyrI chains organized as three dimers (R2).

It catalyses the reaction carbamoyl phosphate + L-aspartate = N-carbamoyl-L-aspartate + phosphate + H(+). The protein operates within pyrimidine metabolism; UMP biosynthesis via de novo pathway; (S)-dihydroorotate from bicarbonate: step 2/3. Functionally, catalyzes the condensation of carbamoyl phosphate and aspartate to form carbamoyl aspartate and inorganic phosphate, the committed step in the de novo pyrimidine nucleotide biosynthesis pathway. The protein is Aspartate carbamoyltransferase catalytic subunit of Helicobacter pylori (strain Shi470).